The sequence spans 206 residues: Outer-membrane lipoprotein LolB (206 aa).

Residues 1–18 (MKTFKFLTALFATAILTA) form the signal peptide. C19 is lipidated: N-palmitoyl cysteine. Residue C19 is the site of S-diacylglycerol cysteine attachment.

This sequence belongs to the LolB family. Monomer.

It localises to the cell outer membrane. Plays a critical role in the incorporation of lipoproteins in the outer membrane after they are released by the LolA protein. The protein is Outer-membrane lipoprotein LolB of Haemophilus influenzae (strain PittEE).